The following is an 86-amino-acid chain: Small ribosomal subunit protein uS15 (86 aa).

The protein belongs to the universal ribosomal protein uS15 family. Part of the 30S ribosomal subunit. Forms a bridge to the 50S subunit in the 70S ribosome, contacting the 23S rRNA.

Its function is as follows. One of the primary rRNA binding proteins, it binds directly to 16S rRNA where it helps nucleate assembly of the platform of the 30S subunit by binding and bridging several RNA helices of the 16S rRNA. Forms an intersubunit bridge (bridge B4) with the 23S rRNA of the 50S subunit in the ribosome. The polypeptide is Small ribosomal subunit protein uS15 (Ruthia magnifica subsp. Calyptogena magnifica).